The primary structure comprises 504 residues: CaM kinase-like vesicle-associated protein (504 aa).

Residues 24–286 (YDLGQVVKTE…AEEAISHEWI (263 aa)) form the Protein kinase domain. Positions 378–504 (KSDDMASADR…AQESQRVETS (127 aa)) are disordered. Ser384 bears the Phosphoserine mark. The span at 390–431 (TPATDGSATPATDGSVTPATDGSITPATDGSVTPATDRSATP) shows a compositional bias: polar residues. Residues Thr438 and Thr462 each carry the phosphothreonine modification. Over residues 445–470 (TVPAAQSSAAPAAKAAATPEPAVAQP) the composition is skewed to low complexity.

It belongs to the protein kinase superfamily. CAMK Ser/Thr protein kinase family. In terms of assembly, interacts with calmodulin, in the presence of calcium. Ca(2+) is required as a cofactor. In terms of tissue distribution, expressed in brain and weakly in eye. Not detected in liver, kidney, spleen, thymus, bladder, aorta, lung, intestine, esophagus, stomach, skeletal muscle, heart, diaphragm, uterus, tail skin, submaxillary gland, prostate, ear, epididymis, placenta, pancreas, ovary, testis, adrenal gland, parathyroid gland, thyroid gland, pineal gland, pituitary and sciatic nerve. In adult hippocampus, predominantly expressed in caudate nucleus, cortex, hypothalamus, olfactory bulb, and midbrain and faintly in pons, brainstem and spinal cord.

The protein resides in the cell membrane. It is found in the cytoplasmic vesicle membrane. In terms of biological role, has no detectable kinase activity in vitro. This is CaM kinase-like vesicle-associated protein (Camkv) from Rattus norvegicus (Rat).